Reading from the N-terminus, the 899-residue chain is CNK3/IPCEF1 fusion protein (899 aa).

The 66-residue stretch at 7–72 folds into the SAM domain; sequence WSPKQVVDWT…LEAVDLLCAL (66 aa). The CRIC domain maps to 80–174; it reads NMKNLVLKLR…TTVQKDCFVA (95 aa). Positions 211–293 constitute a PDZ domain; it reads EVHLPNIKPG…GVVLLLKKRP (83 aa). Disordered stretches follow at residues 309 to 334 and 347 to 390; these read WKPP…DTSL and PPPP…FLDQ. Positions 332–457 constitute a DUF1170 domain; that stretch reads TSLKKEKSAI…ARPRGHGRKA (126 aa). At serine 383 the chain carries Phosphoserine. In terms of domain architecture, PH spans 503–602; sequence HADCQGWLYK…WLNKLGSAVI (100 aa). Disordered regions lie at residues 605-687, 735-770, and 868-899; these read ESTT…PDTV, LSSD…TKVS, and QQQR…ENSI. The segment covering 613–624 has biased composition (acidic residues); it reads CYSESEQEDPEI. Over residues 634 to 662 the composition is skewed to low complexity; the sequence is ASQTQSLTAQQASSSSPSLSGTSYSFSSL. The span at 663–676 shows a compositional bias: polar residues; sequence ENTVKTPSSFPSSL. Over residues 735 to 745 the composition is skewed to low complexity; sequence LSSDDTSSLSS. Residues 761–770 show a composition bias toward basic and acidic residues; that stretch reads IMDKEETKVS. The tract at residues 851-899 is required for interaction with CYTH2; the sequence is KYREWKVMNTLLIQDIYQQQRASPAPDDTDDTPQELKKSPSSPSVENSI. At serine 873 the chain carries Phosphoserine. A compositionally biased stretch (polar residues) spans 889–899; sequence SPSSPSVENSI.

It belongs to the CNKSR family.

Functionally, required for hepatocyte growth factor (HGF)-dependent activation of Arf6 and HGF-stimulated cell migration. This is CNK3/IPCEF1 fusion protein (CNK3/IPCEF1) from Homo sapiens (Human).